The sequence spans 327 residues: Biotin synthase (327 aa).

The region spanning F49–R282 is the Radical SAM core domain. [4Fe-4S] cluster-binding residues include C67, C71, and C74. The [2Fe-2S] cluster site is built by S110, C142, C201, and R277.

Belongs to the radical SAM superfamily. Biotin synthase family. In terms of assembly, homodimer. [4Fe-4S] cluster serves as cofactor. It depends on [2Fe-2S] cluster as a cofactor.

It carries out the reaction (4R,5S)-dethiobiotin + (sulfur carrier)-SH + 2 reduced [2Fe-2S]-[ferredoxin] + 2 S-adenosyl-L-methionine = (sulfur carrier)-H + biotin + 2 5'-deoxyadenosine + 2 L-methionine + 2 oxidized [2Fe-2S]-[ferredoxin]. It participates in cofactor biosynthesis; biotin biosynthesis; biotin from 7,8-diaminononanoate: step 2/2. In terms of biological role, catalyzes the conversion of dethiobiotin (DTB) to biotin by the insertion of a sulfur atom into dethiobiotin via a radical-based mechanism. This Methanococcus maripaludis (strain C5 / ATCC BAA-1333) protein is Biotin synthase.